The following is a 323-amino-acid chain: Beta-ketoacyl-[acyl-carrier-protein] synthase III (323 aa).

Catalysis depends on residues Cys112 and His248. The tract at residues 249-253 is ACP-binding; that stretch reads QANRR. The active site involves Asn278.

This sequence belongs to the thiolase-like superfamily. FabH family. In terms of assembly, homodimer.

The protein localises to the cytoplasm. It carries out the reaction malonyl-[ACP] + acetyl-CoA + H(+) = 3-oxobutanoyl-[ACP] + CO2 + CoA. The protein operates within lipid metabolism; fatty acid biosynthesis. Its function is as follows. Catalyzes the condensation reaction of fatty acid synthesis by the addition to an acyl acceptor of two carbons from malonyl-ACP. Catalyzes the first condensation reaction which initiates fatty acid synthesis and may therefore play a role in governing the total rate of fatty acid production. Possesses both acetoacetyl-ACP synthase and acetyl transacylase activities. Its substrate specificity determines the biosynthesis of branched-chain and/or straight-chain of fatty acids. This chain is Beta-ketoacyl-[acyl-carrier-protein] synthase III, found in Streptococcus agalactiae serotype Ia (strain ATCC 27591 / A909 / CDC SS700).